Consider the following 405-residue polypeptide: CMP-sialic acid transporter 4 (405 aa).

The Cytoplasmic portion of the chain corresponds to Met1–Asn43. A helical transmembrane segment spans residues Phe44–Ser64. Residues Lys65–Pro74 are Lumenal-facing. Residues Ile75–Ile95 traverse the membrane as a helical segment. At Gln96–Ala121 the chain is on the cytoplasmic side. Residues Leu122–Leu142 form a helical membrane-spanning segment. A topological domain (lumenal) is located at residue Tyr143. Residues Phe144–Leu164 form a helical membrane-spanning segment. The Cytoplasmic portion of the chain corresponds to Lys165–Lys171. A helical transmembrane segment spans residues Phe172–Leu192. At Ser193–Gly203 the chain is on the lumenal side. A helical membrane pass occupies residues Leu204 to Ala224. Over Ser225–Asn244 the chain is Cytoplasmic. The helical transmembrane segment at Leu245–Phe265 threads the bilayer. Residues Gln266 to Thr281 are Lumenal-facing. The helical transmembrane segment at Met282–Ala302 threads the bilayer. Over Asp303–Ser322 the chain is Cytoplasmic. Residues Ala323–Ile343 form a helical membrane-spanning segment. Residues Ser344–Ile405 are Lumenal-facing.

Belongs to the nucleotide-sugar transporter family. CMP-Sialate:CMP antiporter (TC 2.A.7.12) subfamily.

It is found in the golgi apparatus membrane. Functionally, sugar transporter involved in the transport of CMP-sialic acid from the cytoplasm into the Golgi. May transport important nucleotide sugars such as CMP-Kdo (2-keto-3-deoxy-D-manno-octulosonic acid) in physiological conditions. The protein is CMP-sialic acid transporter 4 of Oryza sativa subsp. japonica (Rice).